The primary structure comprises 282 residues: Phosphatidylserine decarboxylase proenzyme (282 aa).

Catalysis depends on charge relay system; for autoendoproteolytic cleavage activity residues D88, H144, and S247. S247 serves as the catalytic Schiff-base intermediate with substrate; via pyruvic acid; for decarboxylase activity. S247 is modified (pyruvic acid (Ser); by autocatalysis).

It belongs to the phosphatidylserine decarboxylase family. PSD-B subfamily. Prokaryotic type I sub-subfamily. As to quaternary structure, heterodimer of a large membrane-associated beta subunit and a small pyruvoyl-containing alpha subunit. Requires pyruvate as cofactor. Is synthesized initially as an inactive proenzyme. Formation of the active enzyme involves a self-maturation process in which the active site pyruvoyl group is generated from an internal serine residue via an autocatalytic post-translational modification. Two non-identical subunits are generated from the proenzyme in this reaction, and the pyruvate is formed at the N-terminus of the alpha chain, which is derived from the carboxyl end of the proenzyme. The autoendoproteolytic cleavage occurs by a canonical serine protease mechanism, in which the side chain hydroxyl group of the serine supplies its oxygen atom to form the C-terminus of the beta chain, while the remainder of the serine residue undergoes an oxidative deamination to produce ammonia and the pyruvoyl prosthetic group on the alpha chain. During this reaction, the Ser that is part of the protease active site of the proenzyme becomes the pyruvoyl prosthetic group, which constitutes an essential element of the active site of the mature decarboxylase.

The protein localises to the cell membrane. It carries out the reaction a 1,2-diacyl-sn-glycero-3-phospho-L-serine + H(+) = a 1,2-diacyl-sn-glycero-3-phosphoethanolamine + CO2. Its pathway is phospholipid metabolism; phosphatidylethanolamine biosynthesis; phosphatidylethanolamine from CDP-diacylglycerol: step 2/2. In terms of biological role, catalyzes the formation of phosphatidylethanolamine (PtdEtn) from phosphatidylserine (PtdSer). This chain is Phosphatidylserine decarboxylase proenzyme, found in Xanthomonas campestris pv. campestris (strain B100).